Consider the following 215-residue polypeptide: Keratin-associated protein 26-1 (215 aa).

Belongs to the PMG family. Interacts with hair keratins.

Functionally, in the hair cortex, hair keratin intermediate filaments are embedded in an interfilamentous matrix, consisting of hair keratin-associated proteins (KRTAP), which are essential for the formation of a rigid and resistant hair shaft through their extensive disulfide bond cross-linking with abundant cysteine residues of hair keratins. The matrix proteins include the high-sulfur and high-glycine-tyrosine keratins. The sequence is that of Keratin-associated protein 26-1 from Mus musculus (Mouse).